A 615-amino-acid chain; its full sequence is Translation initiation factor IF-2 (615 aa).

The tr-type G domain maps to 118 to 285 (KRPPIVTVMG…AILTLAEINE (168 aa)). A G1 region spans residues 127–134 (GHVDHGKT). Residue 127 to 134 (GHVDHGKT) participates in GTP binding. Residues 152–156 (GITQH) form a G2 region. The G3 stretch occupies residues 173 to 176 (DTPG). Residues 173–177 (DTPGH) and 227–230 (NKMD) contribute to the GTP site. Positions 227 to 230 (NKMD) are G4. The tract at residues 263–265 (SAI) is G5.

Belongs to the TRAFAC class translation factor GTPase superfamily. Classic translation factor GTPase family. IF-2 subfamily.

Its subcellular location is the cytoplasm. Its function is as follows. One of the essential components for the initiation of protein synthesis. Protects formylmethionyl-tRNA from spontaneous hydrolysis and promotes its binding to the 30S ribosomal subunits. Also involved in the hydrolysis of GTP during the formation of the 70S ribosomal complex. The chain is Translation initiation factor IF-2 from Mycoplasmoides gallisepticum (strain R(low / passage 15 / clone 2)) (Mycoplasma gallisepticum).